A 101-amino-acid polypeptide reads, in one-letter code: Small ribosomal subunit protein uS14 (101 aa).

Residues Met-1–Glu-26 form a disordered region. Positions Asn-10 to Asn-22 are enriched in basic residues.

It belongs to the universal ribosomal protein uS14 family. In terms of assembly, part of the 30S ribosomal subunit. Contacts proteins S3 and S10.

In terms of biological role, binds 16S rRNA, required for the assembly of 30S particles and may also be responsible for determining the conformation of the 16S rRNA at the A site. The protein is Small ribosomal subunit protein uS14 of Rickettsia prowazekii (strain Madrid E).